The sequence spans 420 residues: Methionine aminopeptidase 2 (420 aa).

The segment at 1–48 is disordered; the sequence is MSDAIAKDAVNTSSEKEPVSATPELKTSGSPDAAVSSGDKKKKKKKKK. Histidine 172 is a substrate binding site. A divalent metal cation is bound by residues aspartate 192, aspartate 203, and histidine 272. Histidine 280 contributes to the substrate binding site. Residues glutamate 305 and glutamate 401 each contribute to the a divalent metal cation site.

Belongs to the peptidase M24A family. Methionine aminopeptidase eukaryotic type 2 subfamily. It depends on Co(2+) as a cofactor. The cofactor is Zn(2+). Mn(2+) is required as a cofactor. Fe(2+) serves as cofactor.

It is found in the cytoplasm. The catalysed reaction is Release of N-terminal amino acids, preferentially methionine, from peptides and arylamides.. Its function is as follows. Cotranslationally removes the N-terminal methionine from nascent proteins. The N-terminal methionine is often cleaved when the second residue in the primary sequence is small and uncharged (Met-Ala-, Cys, Gly, Pro, Ser, Thr, or Val). The sequence is that of Methionine aminopeptidase 2 from Lachancea thermotolerans (strain ATCC 56472 / CBS 6340 / NRRL Y-8284) (Yeast).